We begin with the raw amino-acid sequence, 332 residues long: ALTYRGVDWSSVVVEERAGVSYKNTNGNAQPLENILAANGVNTVRQRVWVNPADGNYNLDYNIAIAKRAKAAGLGVYIDFHYSDTWADPAHQTMPAGWPSDIDNLSWKLYNYTLDAANKLQNAGIQPTIVSIGNEIRAGLLWPTGRTENWANIARLLHSAAWGIKDSSLSPKPKIMIHLDNGWDWGTQNWWYTNVLKQGTLELSDFDMMGVSFYPFYSSSATLSALKSSLDNMAKTWNKEIAVVETNWPISCPNPRYSFPSDVKNIPFSPEGQTTFITNVANIVSSVSRGVGLFYWEPAWIHNANLGSSCADNTMFSQSGQALSSLSVFQRI.

N-linked (GlcNAc...) asparagine glycosylation is present at Asn111. Glu135 acts as the Proton donor in catalysis. Glu245 functions as the Nucleophile in the catalytic mechanism.

The protein belongs to the glycosyl hydrolase 53 family.

It carries out the reaction The enzyme specifically hydrolyzes (1-&gt;4)-beta-D-galactosidic linkages in type I arabinogalactans.. This is Arabinogalactan endo-beta-1,4-galactanase from Thermothelomyces thermophilus (Myceliophthora thermophila).